The primary structure comprises 259 residues: tRNA pseudouridine synthase A (259 aa).

The Nucleophile role is filled by Asp50. Tyr101 is a substrate binding site.

Belongs to the tRNA pseudouridine synthase TruA family.

The enzyme catalyses uridine(38/39/40) in tRNA = pseudouridine(38/39/40) in tRNA. Its function is as follows. Formation of pseudouridine at positions 38, 39 and 40 in the anticodon stem and loop of transfer RNAs. This is tRNA pseudouridine synthase A from Methanocaldococcus jannaschii (strain ATCC 43067 / DSM 2661 / JAL-1 / JCM 10045 / NBRC 100440) (Methanococcus jannaschii).